A 183-amino-acid polypeptide reads, in one-letter code: Large ribosomal subunit protein bL32m (183 aa).

Zn(2+)-binding residues include cysteine 99, cysteine 102, cysteine 112, and cysteine 115.

The protein belongs to the bacterial ribosomal protein bL32 family. Component of the mitochondrial large ribosomal subunit (mt-LSU).

The protein resides in the mitochondrion. Functionally, component of the mitochondrial large ribosomal subunit (mt-LSU). The mitochondrial ribosome (mitoribosome) is a large ribonucleoprotein complex responsible for the synthesis of proteins inside mitochondria. In Caenorhabditis elegans, this protein is Large ribosomal subunit protein bL32m (mrpl-32).